We begin with the raw amino-acid sequence, 263 residues long: Tryptophan synthase alpha chain (263 aa).

Active-site proton acceptor residues include Glu-51 and Asp-62.

The protein belongs to the TrpA family. As to quaternary structure, tetramer of two alpha and two beta chains.

It carries out the reaction (1S,2R)-1-C-(indol-3-yl)glycerol 3-phosphate + L-serine = D-glyceraldehyde 3-phosphate + L-tryptophan + H2O. Its pathway is amino-acid biosynthesis; L-tryptophan biosynthesis; L-tryptophan from chorismate: step 5/5. Functionally, the alpha subunit is responsible for the aldol cleavage of indoleglycerol phosphate to indole and glyceraldehyde 3-phosphate. This Methanosarcina barkeri (strain Fusaro / DSM 804) protein is Tryptophan synthase alpha chain.